A 108-amino-acid chain; its full sequence is Phosphoribosyl-ATP pyrophosphatase (108 aa).

The disordered stretch occupies residues 88–108 (VENELDRREGRSGIEEKASRK). The segment covering 91 to 108 (ELDRREGRSGIEEKASRK) has biased composition (basic and acidic residues).

It belongs to the PRA-PH family.

It localises to the cytoplasm. The enzyme catalyses 1-(5-phospho-beta-D-ribosyl)-ATP + H2O = 1-(5-phospho-beta-D-ribosyl)-5'-AMP + diphosphate + H(+). It functions in the pathway amino-acid biosynthesis; L-histidine biosynthesis; L-histidine from 5-phospho-alpha-D-ribose 1-diphosphate: step 2/9. In Paracoccus denitrificans (strain Pd 1222), this protein is Phosphoribosyl-ATP pyrophosphatase.